A 263-amino-acid chain; its full sequence is Chromosomal replication initiator protein DnaA (263 aa).

Residue glutamate 1 is a region of interest, domain I, interacts with DnaA modulators. Position 1 (glutamate 1) is a region of interest, domain II. The domain III, AAA+ region stretch occupies residues 1 to 179 (ESGMGKTHLL…GSVSRLNFWS (179 aa)). Residues glycine 3, glycine 5, lysine 6, and threonine 7 each coordinate ATP. Residues 180–263 (QQNPEEKIIT…HTLAQIGEEF (84 aa)) are domain IV, binds dsDNA.

This sequence belongs to the DnaA family. In terms of assembly, oligomerizes as a right-handed, spiral filament on DNA at oriC.

The protein localises to the cytoplasm. Its function is as follows. Plays an essential role in the initiation and regulation of chromosomal replication. ATP-DnaA binds to the origin of replication (oriC) to initiate formation of the DNA replication initiation complex once per cell cycle. Binds the DnaA box (a 9 base pair repeat at the origin) and separates the double-stranded (ds)DNA. Forms a right-handed helical filament on oriC DNA; dsDNA binds to the exterior of the filament while single-stranded (ss)DNA is stabiized in the filament's interior. The ATP-DnaA-oriC complex binds and stabilizes one strand of the AT-rich DNA unwinding element (DUE), permitting loading of DNA polymerase. After initiation quickly degrades to an ADP-DnaA complex that is not apt for DNA replication. Binds acidic phospholipids. This chain is Chromosomal replication initiator protein DnaA, found in Mycoplasma mycoides.